Reading from the N-terminus, the 313-residue chain is Aspartoacylase (313 aa).

Positions 21 and 24 each coordinate Zn(2+). Arg-63, Asn-70, and Arg-71 together coordinate N-acetyl-L-aspartate. His-116 contacts Zn(2+). N-acetyl-L-aspartate is bound by residues Tyr-164 and Arg-168. The active-site Proton donor/acceptor is Glu-178. Tyr-288 is a binding site for N-acetyl-L-aspartate.

The protein belongs to the AspA/AstE family. Aspartoacylase subfamily. In terms of assembly, homodimer. Zn(2+) serves as cofactor.

Its subcellular location is the cytoplasm. The protein localises to the nucleus. It catalyses the reaction an N-acyl-L-aspartate + H2O = a carboxylate + L-aspartate. It carries out the reaction N-acetyl-L-aspartate + H2O = L-aspartate + acetate. In terms of biological role, catalyzes the deacetylation of N-acetylaspartic acid (NAA) to produce acetate and L-aspartate. NAA occurs in high concentration in brain and its hydrolysis NAA plays a significant part in the maintenance of intact white matter. In other tissues it acts as a scavenger of NAA from body fluids. The sequence is that of Aspartoacylase from Pongo abelii (Sumatran orangutan).